The following is a 420-amino-acid chain: MLKAVILIGGPQKGTRFRPLSFEVPKPLFPVAGVPMIQHHIEACAQVPGMQEILLIGFYQPDEPLTQFLEAAQQEFNLPVRYLQEFAPLGTGGGLYHFRDQILAGSPEAFFVLNADVCSDFPLSAMLEAHRRQRHPFLLLGTTANRTQSLNYGCIVENPQTHEVLHYVEKPSTFISDIINCGIYLFSPEALKPLRDVFQRNQQDGQLEDSPGLWPGAGTIRLEQDVFSALAGQGQIYVHLTDGIWSQIKSAGSALYASRLYLSRYQDTHPERLAKHTPGGPRIRGNVYIHPTAKVAPSAVLGPNVSIGKGVTVGEGVRLRESIVLHGATLQEHTCVLHSIVGWGSTVGRWARVEGTPNDPNPNDPRARMDSESLFKDGKLLPAITILGCRVRIPAEVLILNSIVLPHKELSRSFTNQIIL.

Residues 2-251 form a substrate-binding domain region; that stretch reads LKAVILIGGP…DGIWSQIKSA (250 aa). Residues E85 and Q247 each contribute to the GDP-alpha-D-mannose site. The interval 273–420 is hexapeptide repeat domain; it reads LAKHTPGGPR…SRSFTNQIIL (148 aa). The C-loop stretch occupies residues 356–384; sequence TPNDPNPNDPRARMDSESLFKDGKLLPAI.

Belongs to the transferase hexapeptide repeat family. Component of the GMPPA-GMPPB mannose-1-phosphate guanylyltransferase complex composed of 4 GMPPA subunits and 8 GMPPB subunits; the complex is organized into three layers, a central layer made up of 2 GMPPA dimers sandwiched between two layers each made up of 2 GMPPB dimers.

It localises to the cytoplasm. Its function is as follows. Regulatory subunit of the GMPPA-GMPPB mannose-1-phosphate guanylyltransferase complex; reduces the catalytic activity of GMPPB when part of the complex. Mediates allosteric feedback inhibition of GMPPB catalytic activity upon binding GDP-alpha-D-mannose. Together with GMPPB regulates GDP-alpha-D-mannose levels. In Papio anubis (Olive baboon), this protein is Mannose-1-phosphate guanylyltransferase regulatory subunit alpha (GMPPA).